Here is a 325-residue protein sequence, read N- to C-terminus: Replication factor C small subunit (325 aa).

52 to 59 (GPAGVGKT) provides a ligand contact to ATP.

The protein belongs to the activator 1 small subunits family. RfcS subfamily. In terms of assembly, heteromultimer composed of small subunits (RfcS) and large subunits (RfcL).

Its function is as follows. Part of the RFC clamp loader complex which loads the PCNA sliding clamp onto DNA. The polypeptide is Replication factor C small subunit (Natronomonas pharaonis (strain ATCC 35678 / DSM 2160 / CIP 103997 / JCM 8858 / NBRC 14720 / NCIMB 2260 / Gabara) (Halobacterium pharaonis)).